The following is a 78-amino-acid chain: Translation initiation factor IF-1, chloroplastic (78 aa).

The 72-residue stretch at 1–72 folds into the S1-like domain; it reads MKKQKLIDME…TKGRITYRFH (72 aa).

Belongs to the IF-1 family. In terms of assembly, component of the 30S ribosomal translation pre-initiation complex which assembles on the 30S ribosome in the order IF-2 and IF-3, IF-1 and N-formylmethionyl-tRNA(fMet); mRNA recruitment can occur at any time during PIC assembly.

Its subcellular location is the plastid. The protein resides in the chloroplast. Functionally, one of the essential components for the initiation of protein synthesis. Stabilizes the binding of IF-2 and IF-3 on the 30S subunit to which N-formylmethionyl-tRNA(fMet) subsequently binds. Helps modulate mRNA selection, yielding the 30S pre-initiation complex (PIC). Upon addition of the 50S ribosomal subunit IF-1, IF-2 and IF-3 are released leaving the mature 70S translation initiation complex. In Huperzia lucidula (Shining clubmoss), this protein is Translation initiation factor IF-1, chloroplastic.